The sequence spans 752 residues: MEDLSAPESALFQGGHTLLPSASFQESVTFKDVIVDFTQEEWKQLDPVQRGLFRDVTLENYTHLVSIGLQVSKPDVISQLEQGTEPWIVEPSIPVGTPGDWVTRPENSITASELDISGEEPSPGAVAEKHKRDDPWSTNFLETCESKGSPERQQANKQTLPREIKITEKTIPTLEQAHVNNDFEKSISVSLDLLTHKQISPKQTSTKTNVKQNLNPVKKEKSCKCNECGKAFTYCSALIRHQRTHTGEKPYKCNECEKAFSRSENLINHQRIHTGDKPYKCDQCGKGFIEGPSLTQHQRIHTGEKPYKCDECGKAFSQRTHLVQHQRIHTGEKPYTCNECGKAFSQRGHFMEHQKIHTGEKPFKCDECDKTFTRSTHLTQHQKIHTGEKTYKCNECGKAFNGPSTFIRHHMIHTGEKPYECNECGKAFSQHSNLTQHQKTHTGEKPYDCAECGKSFSYWSSLAQHLKIHTGEKPYKCNECGKAFSYCSSLTQHRRIHTREKPFECSECGKAFSYLSNLNQHQKTHTQEKAYECKECGKAFIRSSSLAKHERIHTGEKPYQCHECGKTFSYGSSLIQHRKIHTGERPYKCNECGRAFNQNIHLTQHKRIHTGAKPYECAECGKAFRHCSSLAQHQKTHTEEKPYHCNKCEKAFSQSSHLAQHQRIHTGEKPYKCNECDKTFSRSTHLTEHQNTHTGEKPYNCNECRKTFSQSTYLIQHQRIHSAEKPFGCNDCGKAFRYRSALNKHQRLHPGI.

The KRAB domain maps to 28–99 (VTFKDVIVDF…EPSIPVGTPG (72 aa)). Residues S117, S122, and S200 each carry the phosphoserine modification. Residue K207 forms a Glycyl lysine isopeptide (Lys-Gly) (interchain with G-Cter in SUMO2) linkage. 19 C2H2-type zinc fingers span residues 223 to 245 (CKCN…QRTH), 251 to 273 (YKCN…QRIH), 279 to 301 (YKCD…QRIH), 307 to 329 (YKCD…QRIH), 335 to 357 (YTCN…QKIH), 363 to 385 (FKCD…QKIH), 391 to 413 (YKCN…HMIH), 419 to 441 (YECN…QKTH), 447 to 469 (YDCA…LKIH), 475 to 497 (YKCN…RRIH), 503 to 525 (FECS…QKTH), 531 to 553 (YECK…ERIH), 559 to 581 (YQCH…RKIH), 587 to 609 (YKCN…KRIH), 615 to 637 (YECA…QKTH), 643 to 665 (YHCN…QRIH), 671 to 693 (YKCN…QNTH), 699 to 721 (YNCN…QRIH), and 727 to 749 (FGCN…QRLH).

Belongs to the krueppel C2H2-type zinc-finger protein family.

The protein resides in the nucleus. Functionally, may be involved in transcriptional regulation. The sequence is that of Zinc finger protein 184 (ZNF184) from Bos taurus (Bovine).